A 251-amino-acid polypeptide reads, in one-letter code: Exotoxin type A (251 aa).

Residues 1–30 (MENNKKVLKKMVFFVLVTFLGLTISQEVFA) form the signal peptide. A disulfide bond links Cys117 and Cys128.

Belongs to the staphylococcal/streptococcal toxin family.

Its function is as follows. Causative agent of the symptoms associated with scarlet fever, have been associated with streptococcal toxic shock-like disease and may play a role in the early events of rheumatic fever. This chain is Exotoxin type A (speA), found in Streptococcus pyogenes serotype M18 (strain MGAS8232).